The chain runs to 703 residues: DNA ligase (703 aa).

Residues 54-58, 103-104, and Glu132 contribute to the NAD(+) site; these read DAEYD and SL. The active-site N6-AMP-lysine intermediate is the Lys134. NAD(+) contacts are provided by Arg155, Glu192, Lys308, and Lys332. Zn(2+) is bound by residues Cys426, Cys429, Cys444, and Cys450. Positions 608-698 constitute a BRCT domain; it reads EGPGPLDGVV…ADAARALAVP (91 aa).

It belongs to the NAD-dependent DNA ligase family. LigA subfamily. Requires Mg(2+) as cofactor. Mn(2+) serves as cofactor.

It catalyses the reaction NAD(+) + (deoxyribonucleotide)n-3'-hydroxyl + 5'-phospho-(deoxyribonucleotide)m = (deoxyribonucleotide)n+m + AMP + beta-nicotinamide D-nucleotide.. In terms of biological role, DNA ligase that catalyzes the formation of phosphodiester linkages between 5'-phosphoryl and 3'-hydroxyl groups in double-stranded DNA using NAD as a coenzyme and as the energy source for the reaction. It is essential for DNA replication and repair of damaged DNA. In Parafrankia sp. (strain EAN1pec), this protein is DNA ligase.